Consider the following 225-residue polypeptide: RNA-binding protein 24-A (225 aa).

The RRM domain occupies threonine 11–leucine 88.

The protein localises to the nucleus. It localises to the cytoplasm. Its function is as follows. Multifunctional RNA-binding protein involved in the regulation of pre-mRNA splicing, mRNA stability and mRNA translation important for cell fate decision and differentiation. Plays a major role in pre-mRNA alternative splicing regulation. Mediates preferentially muscle-specific exon inclusion in numerous mRNAs important for striated cardiac and skeletal muscle cell differentiation. Binds to intronic splicing enhancer (ISE) composed of stretches of GU-rich motifs localized in flanking intron of exon that will be included by alternative splicing. Involved in embryonic stem cell (ESC) transition to cardiac cell differentiation by promoting pre-mRNA alternative splicing events of several pluripotency and/or differentiation genes. Plays a role in the regulation of mRNA stability and mRNA translation to which it is bound. Involved in myogenic differentiation by regulating myog levels. Binds to a huge amount of mRNAs. Required for embryonic heart development, sarcomer and M-band formation in striated muscles. The sequence is that of RNA-binding protein 24-A (rbm24-a) from Xenopus laevis (African clawed frog).